Consider the following 704-residue polypeptide: Acetate--CoA ligase [ADP-forming] (704 aa).

This sequence in the N-terminal section; belongs to the acetate CoA ligase alpha subunit family. In the C-terminal section; belongs to the acetate CoA ligase beta subunit family. In terms of assembly, homodimer.

It carries out the reaction acetate + ATP + CoA = acetyl-CoA + ADP + phosphate. In terms of biological role, catalyzes the formation of acetate and ATP from acetyl-CoA by using ADP and phosphate. Can also use butyryl-CoA, but not phenylacetyl-CoA. Cannot catalyze the reverse reaction. In Methanocaldococcus jannaschii (strain ATCC 43067 / DSM 2661 / JAL-1 / JCM 10045 / NBRC 100440) (Methanococcus jannaschii), this protein is Acetate--CoA ligase [ADP-forming].